The primary structure comprises 272 residues: HMP-PP phosphatase (272 aa).

The active-site Nucleophile is the D8. The Mg(2+) site is built by D8, D10, and D212.

Belongs to the HAD-like hydrolase superfamily. Cof family. Mg(2+) is required as a cofactor.

It catalyses the reaction 4-amino-2-methyl-5-(diphosphooxymethyl)pyrimidine + H2O = 4-amino-2-methyl-5-(phosphooxymethyl)pyrimidine + phosphate + H(+). Functionally, catalyzes the hydrolysis of 4-amino-2-methyl-5-hydroxymethylpyrimidine pyrophosphate (HMP-PP) to 4-amino-2-methyl-5-hydroxymethylpyrimidine phosphate (HMP-P). The polypeptide is HMP-PP phosphatase (Escherichia coli (strain K12 / MC4100 / BW2952)).